Consider the following 165-residue polypeptide: Nucleotide-binding protein P9215_05621 (165 aa).

This sequence belongs to the YajQ family.

Its function is as follows. Nucleotide-binding protein. This chain is Nucleotide-binding protein P9215_05621, found in Prochlorococcus marinus (strain MIT 9215).